We begin with the raw amino-acid sequence, 267 residues long: Phosphate import ATP-binding protein PstB 2 (267 aa).

Positions 21-262 constitute an ABC transporter domain; that stretch reads LSTKDVHVYY…AKLQSTNDYV (242 aa). 53–60 provides a ligand contact to ATP; it reads GPSGSGKS.

The protein belongs to the ABC transporter superfamily. Phosphate importer (TC 3.A.1.7) family. The complex is composed of two ATP-binding proteins (PstB), two transmembrane proteins (PstC and PstA) and a solute-binding protein (PstS).

It localises to the cell membrane. The catalysed reaction is phosphate(out) + ATP + H2O = ADP + 2 phosphate(in) + H(+). Functionally, part of the ABC transporter complex PstSACB involved in phosphate import. Responsible for energy coupling to the transport system. This is Phosphate import ATP-binding protein PstB 2 from Streptococcus pneumoniae (strain ATCC BAA-255 / R6).